The sequence spans 497 residues: uncharacterized protein (497 aa).

Residues Asp12, Thr13, and Cys52 each contribute to the Ca(2+) site. Cys52 serves as the catalytic Nucleophile. Cys52 bears the 3-oxoalanine (Cys) mark. Residue His102 is part of the active site. The Ca(2+) site is built by Asp284 and His285.

This sequence belongs to the sulfatase family. The cofactor is Ca(2+). In terms of processing, the conversion to 3-oxoalanine (also known as C-formylglycine, FGly), of a serine or cysteine residue in prokaryotes and of a cysteine residue in eukaryotes, is critical for catalytic activity.

This is an uncharacterized protein from Escherichia coli (strain K12).